A 122-amino-acid polypeptide reads, in one-letter code: Basic phospholipase A2 Ts-G6D49 (122 aa).

7 cysteine pairs are disulfide-bonded: Cys-26–Cys-115, Cys-28–Cys-44, Cys-43–Cys-95, Cys-49–Cys-122, Cys-50–Cys-88, Cys-57–Cys-81, and Cys-75–Cys-86. Residues Tyr-27, Gly-29, and Gly-31 each coordinate Ca(2+). His-47 is an active-site residue. Asp-48 contacts Ca(2+). Asp-89 is an active-site residue.

It depends on Ca(2+) as a cofactor. In terms of tissue distribution, expressed by the venom gland.

It localises to the secreted. The catalysed reaction is a 1,2-diacyl-sn-glycero-3-phosphocholine + H2O = a 1-acyl-sn-glycero-3-phosphocholine + a fatty acid + H(+). Functionally, snake venom phospholipase A2 that induces fast and sustaining local edema a few hours after injection (5-10 ug) in the hind paw, and prolongs the coagulation time of human plasma. Exhibits moderate hydrolytic activities and prefers the zwitterionic micelles (dPPC with Triton X-100) to the anionic micelles (dPPC with deoxycholate). PLA2 catalyzes the calcium-dependent hydrolysis of the 2-acyl groups in 3-sn-phosphoglycerides. This chain is Basic phospholipase A2 Ts-G6D49, found in Trimeresurus stejnegeri (Chinese green tree viper).